Reading from the N-terminus, the 439-residue chain is Homeobox protein ceh-32 (439 aa).

Residues 183–243 constitute a DNA-binding region (homeobox); it reads WDGEQKTHCF…KNRRQRDRAA (61 aa). Disordered stretches follow at residues 253–293, 344–365, and 379–439; these read GVEL…SHIP, EEEN…KKRS, and VSPS…SQSE. Composition is skewed to acidic residues over residues 264 to 274 and 344 to 358; these read SDSDDDFEDSM and EEEN…EADI. The span at 379 to 392 shows a compositional bias: polar residues; sequence VSPSQCSPCSNESL. Positions 398-428 are enriched in basic and acidic residues; sequence VKTEEVKKEDDEAAEEDSRSVKSETSEDPKH.

Belongs to the SIX/Sine oculis homeobox family. As to quaternary structure, interacts with gmn-1. As to expression, expressed in the posterior gonad. Expressed in some cells in the head that are probably neurons. Expressed in the dorsal and ventral neuron RMD pair and the inner labial neuron class IL1. Not expressed in BAG neurons.

The protein resides in the nucleus. In terms of biological role, transcription factor which binds a motif with the core sequence 5'-GTATCA-3'. Plays a role in head morphogenesis. Involved in embryonic development. Required for cell specification of the RIA interneurons. May cooperate with the transcription factor vab-3 and phosphatase eya-1 to repress transcription factor ets-5 expression in non BAG neuronal cells. This chain is Homeobox protein ceh-32, found in Caenorhabditis elegans.